The following is a 320-amino-acid chain: Cytochrome f (320 aa).

A signal peptide spans 1–35 (MQIRNTFSSLKGEITRFISVSLMIYIITRASISNA). Heme-binding residues include tyrosine 36, cysteine 56, cysteine 59, and histidine 60. The chain crosses the membrane as a helical span at residues 286–306 (VQGLLFFLASVVLAQIFLVLK).

This sequence belongs to the cytochrome f family. In terms of assembly, the 4 large subunits of the cytochrome b6-f complex are cytochrome b6, subunit IV (17 kDa polypeptide, petD), cytochrome f and the Rieske protein, while the 4 small subunits are PetG, PetL, PetM and PetN. The complex functions as a dimer. Heme serves as cofactor.

It localises to the plastid. Its subcellular location is the chloroplast thylakoid membrane. Functionally, component of the cytochrome b6-f complex, which mediates electron transfer between photosystem II (PSII) and photosystem I (PSI), cyclic electron flow around PSI, and state transitions. The polypeptide is Cytochrome f (Citrus sinensis (Sweet orange)).